Reading from the N-terminus, the 437-residue chain is Phenylacetate-coenzyme A ligase (437 aa).

The protein belongs to the phenylacetyl-CoA ligase family. As to quaternary structure, monomer.

It catalyses the reaction 2-phenylacetate + ATP + CoA = phenylacetyl-CoA + AMP + diphosphate. Its pathway is aromatic compound metabolism; phenylacetate degradation. In terms of biological role, catalyzes the activation of phenylacetic acid (PA) to phenylacetyl-CoA (PA-CoA). This chain is Phenylacetate-coenzyme A ligase (paaK), found in Escherichia coli (strain K12).